Consider the following 1231-residue polypeptide: Pesticidal crystal protein Cry1Bd (1231 aa).

This sequence belongs to the delta endotoxin family.

In terms of biological role, promotes colloidosmotic lysis by binding to the midgut epithelial cells of lepidopteran larvae. Toxic to Plutella xylostella. The chain is Pesticidal crystal protein Cry1Bd (cry1Bd) from Bacillus thuringiensis subsp. wuhanensis.